The sequence spans 243 residues: DNA repair protein RecO (243 aa).

The protein belongs to the RecO family.

In terms of biological role, involved in DNA repair and RecF pathway recombination. This is DNA repair protein RecO from Bartonella quintana (strain Toulouse) (Rochalimaea quintana).